Reading from the N-terminus, the 156-residue chain is Small ribosomal subunit protein uS7 (156 aa).

It belongs to the universal ribosomal protein uS7 family. Part of the 30S ribosomal subunit. Contacts proteins S9 and S11.

One of the primary rRNA binding proteins, it binds directly to 16S rRNA where it nucleates assembly of the head domain of the 30S subunit. Is located at the subunit interface close to the decoding center, probably blocks exit of the E-site tRNA. The sequence is that of Small ribosomal subunit protein uS7 from Acholeplasma laidlawii (strain PG-8A).